The following is a 454-amino-acid chain: UPF0210 protein Ppro_0613 (454 aa).

The protein belongs to the UPF0210 family. Homodimer.

This chain is UPF0210 protein Ppro_0613, found in Pelobacter propionicus (strain DSM 2379 / NBRC 103807 / OttBd1).